We begin with the raw amino-acid sequence, 263 residues long: Non-homologous end joining protein Ku 3 (263 aa).

In terms of domain architecture, Ku spans 6-169 (FGLVSVPVQL…WADEVRDPHR (164 aa)).

This sequence belongs to the prokaryotic Ku family. Homodimer. Interacts with LigD.

Its function is as follows. With LigD forms a non-homologous end joining (NHEJ) DNA repair enzyme, which repairs dsDNA breaks with reduced fidelity. Binds linear dsDNA with 5'- and 3'- overhangs but not closed circular dsDNA nor ssDNA. Recruits and stimulates the ligase activity of LigD. The chain is Non-homologous end joining protein Ku 3 from Saccharopolyspora erythraea (strain ATCC 11635 / DSM 40517 / JCM 4748 / NBRC 13426 / NCIMB 8594 / NRRL 2338).